Consider the following 772-residue polypeptide: 5-methyltetrahydropteroyltriglutamate--homocysteine methyltransferase (772 aa).

5-methyltetrahydropteroyltri-L-glutamate contacts are provided by residues 24-27 (RELK) and K120. The segment at 404 to 428 (DPAVRSRTAATTDADARRSGPYPER) is disordered. L-homocysteine contacts are provided by residues 446–448 (IGS) and E499. L-methionine-binding positions include 446–448 (IGS) and E499. Position 576 (W576) interacts with 5-methyltetrahydropteroyltri-L-glutamate. L-homocysteine is bound at residue D614. Residue D614 coordinates L-methionine. E620 provides a ligand contact to 5-methyltetrahydropteroyltri-L-glutamate. Zn(2+) is bound by residues H656, C658, and E680. The Proton donor role is filled by H709. Position 741 (C741) interacts with Zn(2+).

It belongs to the vitamin-B12 independent methionine synthase family. Requires Zn(2+) as cofactor.

It catalyses the reaction 5-methyltetrahydropteroyltri-L-glutamate + L-homocysteine = tetrahydropteroyltri-L-glutamate + L-methionine. Its pathway is amino-acid biosynthesis; L-methionine biosynthesis via de novo pathway; L-methionine from L-homocysteine (MetE route): step 1/1. In terms of biological role, catalyzes the transfer of a methyl group from 5-methyltetrahydrofolate to homocysteine resulting in methionine formation. The chain is 5-methyltetrahydropteroyltriglutamate--homocysteine methyltransferase from Streptomyces avermitilis (strain ATCC 31267 / DSM 46492 / JCM 5070 / NBRC 14893 / NCIMB 12804 / NRRL 8165 / MA-4680).